Reading from the N-terminus, the 238-residue chain is Probable transcriptional regulatory protein LACR_0237 (238 aa).

It belongs to the TACO1 family. YeeN subfamily.

Its subcellular location is the cytoplasm. This Lactococcus lactis subsp. cremoris (strain SK11) protein is Probable transcriptional regulatory protein LACR_0237.